We begin with the raw amino-acid sequence, 170 residues long: Opacity-related protein POPM3 (170 aa).

Belongs to the opacity porin family.

The protein resides in the cell outer membrane. The sequence is that of Opacity-related protein POPM3 (opr) from Neisseria meningitidis serogroup C.